Consider the following 422-residue polypeptide: Growth arrest-specific protein 7 (422 aa).

The disordered stretch occupies residues Met1–Asn117. The 34-residue stretch at Val22–Ser55 folds into the WW domain. Polar residues predominate over residues Val41–Arg52. Residues Pro53–Pro65 are compositionally biased toward low complexity. Ser62 and Ser108 each carry phosphoserine. The segment covering Arg95 to Asn117 has biased composition (polar residues). An F-BAR domain is found at Thr141–Asp402. Positions Glu254–Leu329 form a coiled coil.

It localises to the cytoplasm. Its function is as follows. May play a role in promoting maturation and morphological differentiation of cerebellar neurons. This is Growth arrest-specific protein 7 (Gas7) from Rattus norvegicus (Rat).